A 62-amino-acid polypeptide reads, in one-letter code: Sperm histone (62 aa).

The disordered stretch occupies residues 1–62 (MARYRRSRTR…GSRRRRRRRY (62 aa)). Position 9 is a phosphothreonine (Thr-9).

It belongs to the protamine P1 family. In terms of tissue distribution, testis.

The protein resides in the nucleus. It is found in the chromosome. Its function is as follows. Protamines substitute for histones in the chromatin of sperm during the haploid phase of spermatogenesis. They compact sperm DNA into a highly condensed, stable and inactive complex. The chain is Sperm histone from Gallus gallus (Chicken).